The following is a 335-amino-acid chain: Probable E3 ubiquitin-protein ligase BAH1-like (335 aa).

An SPX domain is found at 1 to 163; that stretch reads MKFGETFTEY…SSENGKNFKL (163 aa). An RING-type zinc finger spans residues 231–280; it reads CAICLETVFNPYALKCGHIFCNSCACSAASVLIFQGIKAAPRHSKCPICR.

Belongs to the RING-type zinc finger family.

The enzyme catalyses S-ubiquitinyl-[E2 ubiquitin-conjugating enzyme]-L-cysteine + [acceptor protein]-L-lysine = [E2 ubiquitin-conjugating enzyme]-L-cysteine + N(6)-ubiquitinyl-[acceptor protein]-L-lysine.. It functions in the pathway protein modification; protein ubiquitination. In Arabidopsis thaliana (Mouse-ear cress), this protein is Probable E3 ubiquitin-protein ligase BAH1-like (RF178).